Reading from the N-terminus, the 426-residue chain is Putative FBD-associated F-box protein At5g53635 (426 aa).

An F-box domain is found at methionine 1–asparagine 45. The FBD domain maps to methionine 353 to histidine 405.

The chain is Putative FBD-associated F-box protein At5g53635 from Arabidopsis thaliana (Mouse-ear cress).